Reading from the N-terminus, the 97-residue chain is Co-chaperonin GroES (97 aa).

Belongs to the GroES chaperonin family. In terms of assembly, heptamer of 7 subunits arranged in a ring. Interacts with the chaperonin GroEL.

Its subcellular location is the cytoplasm. Functionally, together with the chaperonin GroEL, plays an essential role in assisting protein folding. The GroEL-GroES system forms a nano-cage that allows encapsulation of the non-native substrate proteins and provides a physical environment optimized to promote and accelerate protein folding. GroES binds to the apical surface of the GroEL ring, thereby capping the opening of the GroEL channel. In Burkholderia vietnamiensis, this protein is Co-chaperonin GroES.